We begin with the raw amino-acid sequence, 510 residues long: ATP synthase subunit alpha, mitochondrial (510 aa).

171 to 178 (GDRQTGKT) is a binding site for ATP.

In terms of assembly, F-type ATP synthases have 2 components, the catalytic core F(1) and the membrane-embedded component F(0), linked together by a central stalk and a peripheral stalk. The central stalk, also called rotor shaft, is often seen as part of F(1). The peripheral stalk is seen as part of F(0). F(0) contains the membrane channel next to the rotor. F-type ATP synthases form dimers but each monomer functions independently in ATP generation. The dimer consists of 18 different polypeptides: ATP1 (subunit alpha, part of F(1), 3 molecules per monomer), ATP2 (subunit beta, part of F(1), 3 molecules per monomer), ATP3 (subunit gamma, part of the central stalk), ATP4 (subunit b, part of the peripheral stalk), ATP5/OSCP (subunit 5/OSCP, part of the peripheral stalk), ATP6 (subunit a, part of the peripheral stalk), ATP7 (subunit d, part of the peripheral stalk), ATP8 (subunit 8, part of the peripheral stalk), OLI1 (subunit c, part of the rotor, 10 molecules per monomer), ATP14 (subunit h, part of the peripheral stalk), ATP15 (subunit epsilon, part of the central stalk), ATP16 (subunit delta, part of the central stalk), ATP17 (subunit f, part of the peripheral stalk), ATP18 (subunit i/j, part of the peripheral stalk). Dimer-specific subunits are ATP19 (subunit k, at interface between monomers), ATP20 (subunit g, at interface between monomers), TIM11 (subunit e, at interface between monomers). Also contains subunit L.

The protein localises to the mitochondrion inner membrane. Functionally, mitochondrial membrane ATP synthase (F(1)F(0) ATP synthase or Complex V) produces ATP from ADP in the presence of a proton gradient across the membrane which is generated by electron transport complexes of the respiratory chain. F-type ATP synthases consist of two structural domains, F(1) - containing the extramembraneous catalytic core, and F(0) - containing the membrane proton channel, linked together by a central stalk and a peripheral stalk. During catalysis, ATP synthesis in the catalytic domain of F(1) is coupled via a rotary mechanism of the central stalk subunits to proton translocation. Subunits alpha/ATP1 and beta/ATP2 form the catalytic core in F(1). Rotation of the central stalk against the surrounding alpha/ATP1(3)beta/ATP2(3) subunits leads to hydrolysis of ATP in three separate catalytic sites on the beta/ATP2 subunits. Subunit alpha/ATP1 does not bear the catalytic high-affinity ATP-binding sites. The sequence is that of ATP synthase subunit alpha, mitochondrial from Pichia angusta (Yeast).